Consider the following 215-residue polypeptide: Redox-sensing transcriptional repressor Rex (215 aa).

Residues 18–57 constitute a DNA-binding region (H-T-H motif); it reads LYYRFLKNLHASGKQRVSSAELSDAVKVDSATIRRDFSYF. 92 to 97 is an NAD(+) binding site; that stretch reads GVGNLG.

This sequence belongs to the transcriptional regulatory Rex family. As to quaternary structure, homodimer.

It is found in the cytoplasm. Its function is as follows. Modulates transcription in response to changes in cellular NADH/NAD(+) redox state. This Bacillus velezensis (strain DSM 23117 / BGSC 10A6 / LMG 26770 / FZB42) (Bacillus amyloliquefaciens subsp. plantarum) protein is Redox-sensing transcriptional repressor Rex.